Here is a 162-residue protein sequence, read N- to C-terminus: Transmembrane protein 92 (162 aa).

The N-terminal stretch at 1 to 22 (MLDTWVWGTLTLTFGLLSSLQG) is a signal peptide. Topologically, residues 23–63 (VSFNETANTCDILNCPKGFTCCVKECCPERKVWDPANDRFR) are extracellular. The chain crosses the membrane as a helical span at residues 64 to 84 (FLVILACIIFPILFICALVSL). Residues 85 to 162 (FCPNCTELQH…QMRGRAYATL (78 aa)) are Cytoplasmic-facing. Residues 134-162 (TPPTEPPPPYSLRPEGPAGQMRGRAYATL) are disordered.

Its subcellular location is the membrane. This is Transmembrane protein 92 (Tmem92) from Mus musculus (Mouse).